The sequence spans 304 residues: Taste receptor type 2 member 4 (304 aa).

Over 1 to 10 (MLWELYAFVF) the chain is Extracellular. The helical transmembrane segment at 11–31 (AASVVFNFVGIVANLFIIVII) threads the bilayer. The Cytoplasmic portion of the chain corresponds to 32 to 46 (SKTWVKSHKISSSDK). The chain crosses the membrane as a helical span at residues 47-67 (ILFSLAITRFLTLGLFLLNTV). Residues 68–80 (YIATNTGRSVYFS) lie on the Extracellular side of the membrane. The chain crosses the membrane as a helical span at residues 81 to 101 (TFFLLCWKFLDSNSLWLVTFL). The Cytoplasmic portion of the chain corresponds to 102–128 (NCLYCVKITHFQHPVFLLLKRTVSMKT). Residues 129-149 (TSLLLACLLISAFTTLLYFVL) form a helical membrane-spanning segment. Topologically, residues 150–171 (TQISRFPEHIIGRNDTLFDVSD) are extracellular. Residue Asn163 is glycosylated (N-linked (GlcNAc...) asparagine). A helical membrane pass occupies residues 172 to 192 (GILTLAASLILSSLLQFLLNV). The Cytoplasmic portion of the chain corresponds to 193-229 (TFASLLIHSLRRHVQKMQRNRSSFWNPQTEAHVGAMR). The chain crosses the membrane as a helical span at residues 230 to 250 (LMICFLVLYIPYSIAALLYFP). Over 251–260 (SYMRKNLRAQ) the chain is Extracellular. A helical membrane pass occupies residues 261-281 (AACMIITAAYPPGHSILLIIT). Over 282–304 (HHKLKAKAKKICCFYKLRDFVSN) the chain is Cytoplasmic.

The protein belongs to the G-protein coupled receptor T2R family. In terms of tissue distribution, expressed in tongue, stomach and duodenum.

The protein resides in the membrane. The protein localises to the cell projection. Its subcellular location is the cilium membrane. In terms of biological role, gustducin-coupled receptor implicated in the perception of bitter compounds in the oral cavity and the gastrointestinal tract. Signals through PLCB2 and the calcium-regulated cation channel TRPM5. In airway epithelial cells, binding of denatonium increases the intracellular calcium ion concentration and stimulates ciliary beat frequency. This chain is Taste receptor type 2 member 4, found in Rattus norvegicus (Rat).